A 475-amino-acid polypeptide reads, in one-letter code: Trigger factor (475 aa).

The region spanning 165-250 (GDRVTIDYLG…VKAVFRPDEL (86 aa)) is the PPIase FKBP-type domain. Positions 439-466 (EYDETDVPEEKPAKKKSAVKEKSAEKTS) are enriched in basic and acidic residues. The disordered stretch occupies residues 439 to 475 (EYDETDVPEEKPAKKKSAVKEKSAEKTSAKKKAPKKA).

It belongs to the FKBP-type PPIase family. Tig subfamily.

The protein resides in the cytoplasm. The enzyme catalyses [protein]-peptidylproline (omega=180) = [protein]-peptidylproline (omega=0). Involved in protein export. Acts as a chaperone by maintaining the newly synthesized protein in an open conformation. Functions as a peptidyl-prolyl cis-trans isomerase. This chain is Trigger factor, found in Bartonella tribocorum (strain CIP 105476 / IBS 506).